The chain runs to 459 residues: MKPLVAIVGRPNVGKSTLFNRLVGRRIALVQDEPGVTRDRHYADAEWEGRQFTFIDTGGFVPGDEDQLLQQVREQAQLAVDECDVIVFVTDARAGLTAADEAVANYLRKSGKPVVLAANKLDNTSGQMQALAGEFYRLGLGDVQALSAEHGLGMQELFDSVVARLPPKEEGEDAEAPPDDGIIRLAIIGRPNVGKSTLVNAILKEKRVVASDVAGTTRDPVDSELTYKDRKLLLTDTAGIRRKKSIAQRVEQFSVVAALKVMERSDVAVLLMDATEPAVDQDAKLAGLAEERGRALVIVVNKWDLVGADQRRQETYRESLKHSLKFVGYAPILFTSALTGSKVEKVVDVATELADQFRFRAPTPQLNRLLDHMVDNHPAPIVRGKPLRMYYIAQVAAAPPTFTITVNHPDGVPDMYKRYITNQLRKTFDLRVPIRLIFKGRPGQAKREARKRPQRQGKR.

2 EngA-type G domains span residues 3 to 169 (PLVA…PPKE) and 183 to 358 (IRLA…DQFR). Residues 9–16 (GRPNVGKS), 56–60 (DTGGF), 119–122 (NKLD), 189–196 (GRPNVGKS), 236–240 (DTAGI), and 301–304 (NKWD) each bind GTP. The KH-like domain occupies 359–442 (FRAPTPQLNR…PIRLIFKGRP (84 aa)).

It belongs to the TRAFAC class TrmE-Era-EngA-EngB-Septin-like GTPase superfamily. EngA (Der) GTPase family. Associates with the 50S ribosomal subunit.

Functionally, GTPase that plays an essential role in the late steps of ribosome biogenesis. This Myxococcus xanthus (strain DK1622) protein is GTPase Der.